The sequence spans 976 residues: Probable alanine--tRNA ligase, chloroplastic/mitochondrial (976 aa).

The transit peptide at 1–54 directs the protein to the chloroplast and mitochondrion; the sequence is MPRPGFAHATAPALAHARARISPVARRRVVVMRTRVDGAAKSLVTQLRLALGST. Positions 71-95 are disordered; it reads LGTATNDQSTGTRANPNAEGKDNSG. The segment covering 73–85 has biased composition (polar residues); the sequence is TATNDQSTGTRAN.

Belongs to the class-II aminoacyl-tRNA synthetase family. In terms of assembly, monomer. The cofactor is Zn(2+).

The protein localises to the plastid. The protein resides in the chloroplast. It is found in the mitochondrion. It catalyses the reaction tRNA(Ala) + L-alanine + ATP = L-alanyl-tRNA(Ala) + AMP + diphosphate. Catalyzes the attachment of alanine to tRNA(Ala) in a two-step reaction: alanine is first activated by ATP to form Ala-AMP and then transferred to the acceptor end of tRNA(Ala). Also edits incorrectly charged tRNA(Ala) via its editing domain. In Ostreococcus tauri, this protein is Probable alanine--tRNA ligase, chloroplastic/mitochondrial.